The sequence spans 689 residues: Solute carrier family 22 member 23 (689 aa).

Disordered regions lie at residues 1-55 and 162-188; these read MAID…PLPA and TASWGTTSNRSNSSDTPPLPSPPGKGN. N-linked (GlcNAc...) asparagine glycosylation occurs at N24. The segment covering 165-177 has biased composition (polar residues); sequence WGTTSNRSNSSDT. The next 2 helical transmembrane spans lie at 229–249 and 253–273; these read FSLLVGLIFGYLITGCIADWV and PVLLFSVIFILIFGLTVALSV. N274 carries N-linked (GlcNAc...) asparagine glycosylation. 8 consecutive transmembrane segments (helical) span residues 283-303, 310-330, 339-359, 462-482, 489-509, 541-561, 572-592, and 601-621; these read FFEGFCLAGIILTLYALRIEL, FIITMVASFVAMAGQFLMPGL, VLQALIICPFLLMLLYWSIFP, ADYYTMASIALASCLAMCLVV, GGLLLFMILTALASLLQLGLL, IAFSIVGMFASHAVGSLSVFF, CGGLGLVLASAGFGMLTAPII, and FLHHIIFACCTLICIICILLL.

It belongs to the major facilitator (TC 2.A.1) superfamily. Organic cation transporter (TC 2.A.1.19) family. Expressed in many tissues, including brain, spinal cord, kidney, liver, eye, adipose tissue, lung, epididymis, adrenal gland, pineal gland, skeletal muscle, heart, spleen, thymus, ovary, uterus, testis and epididymis.

The protein resides in the membrane. The chain is Solute carrier family 22 member 23 (Slc22a23) from Rattus norvegicus (Rat).